A 295-amino-acid chain; its full sequence is Ribosomal protein L11 methyltransferase (295 aa).

Residues T150, G171, D193, and N232 each contribute to the S-adenosyl-L-methionine site.

Belongs to the methyltransferase superfamily. PrmA family.

The protein localises to the cytoplasm. The catalysed reaction is L-lysyl-[protein] + 3 S-adenosyl-L-methionine = N(6),N(6),N(6)-trimethyl-L-lysyl-[protein] + 3 S-adenosyl-L-homocysteine + 3 H(+). In terms of biological role, methylates ribosomal protein L11. The sequence is that of Ribosomal protein L11 methyltransferase from Methylobacillus flagellatus (strain ATCC 51484 / DSM 6875 / VKM B-1610 / KT).